Consider the following 401-residue polypeptide: tRNA(Met) cytidine acetate ligase (401 aa).

ATP-binding positions include 7–20 (IVEY…HLYH), G101, N160, and 185–186 (RI).

This sequence belongs to the TmcAL family.

The protein resides in the cytoplasm. The catalysed reaction is cytidine(34) in elongator tRNA(Met) + acetate + ATP = N(4)-acetylcytidine(34) in elongator tRNA(Met) + AMP + diphosphate. Functionally, catalyzes the formation of N(4)-acetylcytidine (ac(4)C) at the wobble position of elongator tRNA(Met), using acetate and ATP as substrates. First activates an acetate ion to form acetyladenylate (Ac-AMP) and then transfers the acetyl group to tRNA to form ac(4)C34. The sequence is that of tRNA(Met) cytidine acetate ligase from Geobacillus sp. (strain WCH70).